The primary structure comprises 219 residues: Trafficking protein particle complex subunit 4 (219 aa).

The protein belongs to the TRAPP small subunits family. TRAPPC4 subfamily. As to quaternary structure, component of the multisubunit TRAPP (transport protein particle) complex, which includes at least TRAPPC2, TRAPPC2L, TRAPPC3, TRAPPC3L, TRAPPC4, TRAPPC5, TRAPPC8, TRAPPC9, TRAPPC10, TRAPPC11 and TRAPPC12. Interacts with SDC2. In terms of tissue distribution, widely expressed.

It is found in the postsynaptic cell membrane. Its subcellular location is the golgi apparatus membrane. The protein localises to the endoplasmic reticulum. It localises to the vesicle. Functionally, core component of the TRAPP complexes which has a function of guanine nucleotide exchange factor activity for Rab1 GTPase. Plays a role in vesicular transport from endoplasmic reticulum to Golgi and autophagy. May play a role in dendrite postsynaptic membrane trafficking. The protein is Trafficking protein particle complex subunit 4 of Mus musculus (Mouse).